The primary structure comprises 993 residues: UPF0182 protein Sare_4110 (993 aa).

7 helical membrane-spanning segments follow: residues 18-38 (IGVLVGVFVLFTLLGWGVQAW), 61-81 (LLLFVTVGLAMAVVVGGNLWL), 110-130 (LGTWFAVVSVVVGLFAGLSAQ), 171-191 (GVAFTAVVLALIGALAVHYVF), 209-229 (AHLSALVAVFVLLKAVAYVLD), 260-280 (ILAYISVVVAIAVLVFSNAWM), and 283-303 (LVWPGISLALLGVSAVAIGGI). Disordered regions lie at residues 892–937 (QGEK…ADAA) and 974–993 (EQAAGPGSAATPTGSPSPGG). Pro residues predominate over residues 900 to 929 (STPPPSGETPAPTPTPTPTPSSPSVTPPPV). Low complexity predominate over residues 976–993 (AAGPGSAATPTGSPSPGG).

It belongs to the UPF0182 family.

Its subcellular location is the cell membrane. This Salinispora arenicola (strain CNS-205) protein is UPF0182 protein Sare_4110.